The following is a 227-amino-acid chain: MINQGPVITIDGPSGAGKGTVSQLIAEKLGWHILDSGALYRLLALAVSHHGMSSDDVETLKVLAEHLDIQFQQSEEGKVEIILEGEIVTQAIRTEEVGNCASKLAAIPEVREGLLLRQRAFSQSPGLVADGRDMGTVVFPSAQIKIFLTASAEERAQRRLQQLQQKGEAVNLGGLVKKIKERDERDANRAIAPLVPAAGALVIDSTNLTIEQVVEMIFAETAKAGLV.

12–20 lines the ATP pocket; sequence GPSGAGKGT.

Belongs to the cytidylate kinase family. Type 1 subfamily.

The protein localises to the cytoplasm. It carries out the reaction CMP + ATP = CDP + ADP. It catalyses the reaction dCMP + ATP = dCDP + ADP. In Marinomonas sp. (strain MWYL1), this protein is Cytidylate kinase.